A 223-amino-acid chain; its full sequence is Phosphoribosylformylglycinamidine synthase subunit PurQ (223 aa).

The 220-residue stretch at 4–223 folds into the Glutamine amidotransferase type-1 domain; sequence KIGVITFPGT…FLSAVGTIAA (220 aa). Cysteine 87 functions as the Nucleophile in the catalytic mechanism. Catalysis depends on residues histidine 195 and glutamate 197.

As to quaternary structure, part of the FGAM synthase complex composed of 1 PurL, 1 PurQ and 2 PurS subunits.

It localises to the cytoplasm. It catalyses the reaction N(2)-formyl-N(1)-(5-phospho-beta-D-ribosyl)glycinamide + L-glutamine + ATP + H2O = 2-formamido-N(1)-(5-O-phospho-beta-D-ribosyl)acetamidine + L-glutamate + ADP + phosphate + H(+). The catalysed reaction is L-glutamine + H2O = L-glutamate + NH4(+). Its pathway is purine metabolism; IMP biosynthesis via de novo pathway; 5-amino-1-(5-phospho-D-ribosyl)imidazole from N(2)-formyl-N(1)-(5-phospho-D-ribosyl)glycinamide: step 1/2. Its function is as follows. Part of the phosphoribosylformylglycinamidine synthase complex involved in the purines biosynthetic pathway. Catalyzes the ATP-dependent conversion of formylglycinamide ribonucleotide (FGAR) and glutamine to yield formylglycinamidine ribonucleotide (FGAM) and glutamate. The FGAM synthase complex is composed of three subunits. PurQ produces an ammonia molecule by converting glutamine to glutamate. PurL transfers the ammonia molecule to FGAR to form FGAM in an ATP-dependent manner. PurS interacts with PurQ and PurL and is thought to assist in the transfer of the ammonia molecule from PurQ to PurL. The protein is Phosphoribosylformylglycinamidine synthase subunit PurQ of Corynebacterium glutamicum (strain ATCC 13032 / DSM 20300 / JCM 1318 / BCRC 11384 / CCUG 27702 / LMG 3730 / NBRC 12168 / NCIMB 10025 / NRRL B-2784 / 534).